Consider the following 377-residue polypeptide: tRNA(Met) cytidine acetate ligase (377 aa).

ATP is bound by residues 7 to 20 (VTEY…HLYH), G100, N153, and R178.

Belongs to the TmcAL family.

It is found in the cytoplasm. The enzyme catalyses cytidine(34) in elongator tRNA(Met) + acetate + ATP = N(4)-acetylcytidine(34) in elongator tRNA(Met) + AMP + diphosphate. Catalyzes the formation of N(4)-acetylcytidine (ac(4)C) at the wobble position of elongator tRNA(Met), using acetate and ATP as substrates. First activates an acetate ion to form acetyladenylate (Ac-AMP) and then transfers the acetyl group to tRNA to form ac(4)C34. This is tRNA(Met) cytidine acetate ligase from Staphylococcus saprophyticus subsp. saprophyticus (strain ATCC 15305 / DSM 20229 / NCIMB 8711 / NCTC 7292 / S-41).